The chain runs to 418 residues: MNLEHMGKAAQEAAFELATVATAQKNQALAIIADELEANKDAILAANAKDINAARESGMTDALIDRLLLNEERLTGIANDVRNVISLNDPVGAELDSRVLENGMRLSRRRVPLGVVGVIYEARPNVTIDIAALCLKTGNASILRGGRETFHSNVELVKVIQVALKKADLPAASVQYIEKPDRELVSQLLRLDQYVDMIIPRGGAGLHKMCKENSTIPVIIGGFGISHIYVDHSADISRSIDVVENAKAQRPSACNALDTLLVSEKVAETFLPRLAERLNKSNVEFVADDAAYSFLEGKAATLRHAADGDFDTEWLSFTLGVKVVADVAEAIAHMRKHNASHSDAILTNDIQSAERFVNAAGSAAVYVNASTRFTDGAQFGLGAEVAVSTQKLHARGPMGLEELTSYKWVGQADYLVRP.

The protein belongs to the gamma-glutamyl phosphate reductase family.

Its subcellular location is the cytoplasm. The catalysed reaction is L-glutamate 5-semialdehyde + phosphate + NADP(+) = L-glutamyl 5-phosphate + NADPH + H(+). It participates in amino-acid biosynthesis; L-proline biosynthesis; L-glutamate 5-semialdehyde from L-glutamate: step 2/2. Catalyzes the NADPH-dependent reduction of L-glutamate 5-phosphate into L-glutamate 5-semialdehyde and phosphate. The product spontaneously undergoes cyclization to form 1-pyrroline-5-carboxylate. This chain is Gamma-glutamyl phosphate reductase, found in Photobacterium profundum (strain SS9).